A 1349-amino-acid chain; its full sequence is Elongator complex protein 1 (1349 aa).

A phosphoserine mark is found at S529, S539, S551, S636, and S828. Positions 919–1349 are mediates dimerization; the sequence is QDVNVVYKSA…DFPKSHIVDF (431 aa). A phosphoserine; by HRR25 mark is found at S1198 and S1202. Phosphoserine is present on residues S1205 and S1209. Positions 1214-1228 are enriched in low complexity; sequence YTGKTGGTAKTGASR. The segment at 1214-1245 is disordered; that stretch reads YTGKTGGTAKTGASRRTAKNKRREERKRARGK. The required for binding to tRNA stretch occupies residues 1228–1246; it reads RRTAKNKRREERKRARGKK.

This sequence belongs to the ELP1/IKA1 family. In terms of assembly, homodimer; dimerization promotes ELP1/IKI3 stability and elongator complex formation. Component of the elongator complex which consists of ELP1/IKI3, ELP2, ELP3, ELP4, ELP5/IKI1 and ELP6. The elongator complex is composed of two copies of the Elp123 subcomplex (composed of ELP1/IKI3, ELP2 and ELP3) and two copies of the Elp456 subcomplex (composed of ELP4, ELP5/IKI1 and ELP6). The Elp123 subcomplex forms a two-lobed scaffold, which binds the Elp456 subcomplex asymmetrically. In the complex, ELP1/IKI3 interacts with ELP2. In each lobe, ELP2 is tightly sandwiched between ELP1/IKI3 and ELP3. The Elp123 subcomplex binds tRNA through ELP1/IKI3 and ELP3 and can bind 2 tRNAs simultaneously. tRNA-binding induces conformational rearrangements which precisely position the targeted anticodon base in the active site. The Elp456 subcomplex binds tRNA and has ATPase activity. ELP1/IKI3 interacts with HRR25 and KTI12. Interacts with KTI11/DPH3. Post-translationally, phosphorylation promotes the tRNA modification function of the elongator complex.

It localises to the cytoplasm. Its subcellular location is the nucleus. Its pathway is tRNA modification; 5-methoxycarbonylmethyl-2-thiouridine-tRNA biosynthesis. In terms of biological role, component of the elongator complex which is required for multiple tRNA modifications, including mcm5U (5-methoxycarbonylmethyl uridine), mcm5s2U (5-methoxycarbonylmethyl-2-thiouridine), and ncm5U (5-carbamoylmethyl uridine). The elongator complex catalyzes formation of carboxymethyluridine in the wobble base at position 34 in tRNAs. Functions as a gamma-toxin target (TOT); disruption of the complex confers resistance to Kluyveromyces lactis toxin zymocin (pGKL1 killer toxin). May also be involved in sensitivity to Pichia inositovora toxin. ELP1/IKI3 binds to tRNA, mediating interaction of the elongator complex with tRNA. Independently, may be involved in polarized exocytosis. The polypeptide is Elongator complex protein 1 (IKI3) (Saccharomyces cerevisiae (strain ATCC 204508 / S288c) (Baker's yeast)).